The primary structure comprises 177 residues: Thymidine kinase (177 aa).

An ATP-binding site is contributed by 11 to 18 (GPMFSGKS). Catalysis depends on Glu-83, which acts as the Proton acceptor. Residue Phe-113 participates in substrate binding. Residues Cys-138 and Cys-141 each contribute to the Zn(2+) site. Residue 157–161 (IELIG) coordinates substrate. Cys-170 and Cys-173 together coordinate Zn(2+).

It belongs to the thymidine kinase family.

It catalyses the reaction thymidine + ATP = dTMP + ADP + H(+). This is Thymidine kinase (TK) from Sheeppox virus (strain KS-1) (SPPV).